The chain runs to 166 residues: Crossover junction endodeoxyribonuclease RuvC (166 aa).

Residues Asp11, Glu71, and Asp142 contribute to the active site. The Mg(2+) site is built by Asp11, Glu71, and Asp142.

Belongs to the RuvC family. Homodimer which binds Holliday junction (HJ) DNA. The HJ becomes 2-fold symmetrical on binding to RuvC with unstacked arms; it has a different conformation from HJ DNA in complex with RuvA. In the full resolvosome a probable DNA-RuvA(4)-RuvB(12)-RuvC(2) complex forms which resolves the HJ. The cofactor is Mg(2+).

It is found in the cytoplasm. The catalysed reaction is Endonucleolytic cleavage at a junction such as a reciprocal single-stranded crossover between two homologous DNA duplexes (Holliday junction).. The RuvA-RuvB-RuvC complex processes Holliday junction (HJ) DNA during genetic recombination and DNA repair. Endonuclease that resolves HJ intermediates. Cleaves cruciform DNA by making single-stranded nicks across the HJ at symmetrical positions within the homologous arms, yielding a 5'-phosphate and a 3'-hydroxyl group; requires a central core of homology in the junction. The consensus cleavage sequence is 5'-(A/T)TT(C/G)-3'. Cleavage occurs on the 3'-side of the TT dinucleotide at the point of strand exchange. HJ branch migration catalyzed by RuvA-RuvB allows RuvC to scan DNA until it finds its consensus sequence, where it cleaves and resolves the cruciform DNA. In Maricaulis maris (strain MCS10) (Caulobacter maris), this protein is Crossover junction endodeoxyribonuclease RuvC.